A 318-amino-acid chain; its full sequence is Acyl-CoA dehydrogenase IpdE2 (318 aa).

FAD-binding residues include arginine 210 and glycine 277.

Belongs to the acyl-CoA dehydrogenase family. Heterotetramer composed of 2 IpdE1 subunits and 2 IpdE2 subunits. The cofactor is FAD.

The catalysed reaction is 3-[(3aS,4S,5R,7aS)-5-hydroxy-7a-methyl-1-oxo-octahydro-1H-inden-4-yl]propanoyl-CoA + A = (2E)-3-[(3aS,4S,5R,7aS)-5-hydroxy-7a-methyl-1-oxo-octahydro-1H-inden-4-yl]prop-2-enoyl-CoA + AH2. The protein operates within steroid metabolism; cholesterol degradation. Functionally, involved in cholesterol degradation. Catalyzes the dehydrogenation of 5OH-HIP-CoA to 5OH-HIPE-CoA. Can also use octanoyl-CoA and dihydroferuloyl-CoA, with lower efficiency. Cannot use 3-oxo-4-pregnene-20-carboxyl-CoA (3-OPC-CoA). The polypeptide is Acyl-CoA dehydrogenase IpdE2 (Mycobacterium tuberculosis (strain ATCC 25618 / H37Rv)).